A 270-amino-acid chain; its full sequence is Cell division protein DivIB (270 aa).

Topologically, residues 1 to 38 (MTRRNNPELNDEREPIDKIKASIDLKKKTIRRNKRKRR) are cytoplasmic. Residues 39–59 (LIKMLQFLIVIGVLIGIYYFD) traverse the membrane as a helical segment. At 60–270 (KSDASRVHNV…QSAVVKACGS (211 aa)) the chain is on the extracellular side. The region spanning 64–135 (SRVHNVRVNG…INLNVTEKKA (72 aa)) is the POTRA domain.

Belongs to the FtsQ/DivIB family. DivIB subfamily.

It is found in the cell membrane. Cell division protein that may be involved in stabilizing or promoting the assembly of the division complex. The sequence is that of Cell division protein DivIB from Erysipelothrix rhusiopathiae (strain Fujisawa).